The chain runs to 177 residues: ATP-dependent protease subunit HslV (177 aa).

Residue Thr-6 is part of the active site. Ser-162, Cys-165, and Thr-168 together coordinate Na(+).

This sequence belongs to the peptidase T1B family. HslV subfamily. As to quaternary structure, a double ring-shaped homohexamer of HslV is capped on each side by a ring-shaped HslU homohexamer. The assembly of the HslU/HslV complex is dependent on binding of ATP.

Its subcellular location is the cytoplasm. It carries out the reaction ATP-dependent cleavage of peptide bonds with broad specificity.. Allosterically activated by HslU binding. Functionally, protease subunit of a proteasome-like degradation complex believed to be a general protein degrading machinery. The sequence is that of ATP-dependent protease subunit HslV from Desulforudis audaxviator (strain MP104C).